Reading from the N-terminus, the 270-residue chain is Putative phosphoenolpyruvate synthase regulatory protein (270 aa).

Gly-150–Thr-157 is an ADP binding site.

This sequence belongs to the pyruvate, phosphate/water dikinase regulatory protein family. PSRP subfamily.

The enzyme catalyses [pyruvate, water dikinase] + ADP = [pyruvate, water dikinase]-phosphate + AMP + H(+). It catalyses the reaction [pyruvate, water dikinase]-phosphate + phosphate + H(+) = [pyruvate, water dikinase] + diphosphate. In terms of biological role, bifunctional serine/threonine kinase and phosphorylase involved in the regulation of the phosphoenolpyruvate synthase (PEPS) by catalyzing its phosphorylation/dephosphorylation. In Shewanella denitrificans (strain OS217 / ATCC BAA-1090 / DSM 15013), this protein is Putative phosphoenolpyruvate synthase regulatory protein.